The sequence spans 217 residues: Trimethylamine corrinoid protein (217 aa).

The B12-binding N-terminal domain occupies 1–92 (MANKEEIIAK…EMEKRKSQTK (92 aa)). Residues 94–217 (LGTVAIGTIE…VAKVKAALNV (124 aa)) form the B12-binding domain. Residue His107 coordinates methylcob(III)alamin.

This sequence belongs to the methylamine corrinoid protein family. In terms of assembly, can form a complex with MttB.

Its pathway is one-carbon metabolism; methanogenesis from trimethylamine. In terms of biological role, acts probably as a methyl group carrier between MttB and either MtbA or MtaA. The chain is Trimethylamine corrinoid protein from Methanosarcina barkeri.